A 517-amino-acid polypeptide reads, in one-letter code: DNA-directed RNA polymerase subunit alpha (517 aa).

It belongs to the RNA polymerase alpha chain family. In terms of assembly, in plastids the minimal PEP RNA polymerase catalytic core is composed of four subunits: alpha, beta, beta', and beta''. When a (nuclear-encoded) sigma factor is associated with the core the holoenzyme is formed, which can initiate transcription.

The protein localises to the plastid. The protein resides in the chloroplast. It carries out the reaction RNA(n) + a ribonucleoside 5'-triphosphate = RNA(n+1) + diphosphate. Functionally, DNA-dependent RNA polymerase catalyzes the transcription of DNA into RNA using the four ribonucleoside triphosphates as substrates. The protein is DNA-directed RNA polymerase subunit alpha (rpoA) of Stigeoclonium helveticum (Green alga).